A 131-amino-acid polypeptide reads, in one-letter code: Small ribosomal subunit protein uS9 (131 aa).

The protein belongs to the universal ribosomal protein uS9 family.

In Haemophilus ducreyi (strain 35000HP / ATCC 700724), this protein is Small ribosomal subunit protein uS9.